The following is a 355-amino-acid chain: 1D-myo-inositol 2-acetamido-2-deoxy-alpha-D-glucopyranoside deacetylase 3 (355 aa).

Zn(2+) contacts are provided by His31, Asp34, and His169.

This sequence belongs to the MshB deacetylase family. It depends on Zn(2+) as a cofactor.

The catalysed reaction is 1D-myo-inositol 2-acetamido-2-deoxy-alpha-D-glucopyranoside + H2O = 1D-myo-inositol 2-amino-2-deoxy-alpha-D-glucopyranoside + acetate. Functionally, catalyzes the deacetylation of 1D-myo-inositol 2-acetamido-2-deoxy-alpha-D-glucopyranoside (GlcNAc-Ins) in the mycothiol biosynthesis pathway. The sequence is that of 1D-myo-inositol 2-acetamido-2-deoxy-alpha-D-glucopyranoside deacetylase 3 from Catenulispora acidiphila (strain DSM 44928 / JCM 14897 / NBRC 102108 / NRRL B-24433 / ID139908).